Here is a 135-residue protein sequence, read N- to C-terminus: Small ribosomal subunit protein uS9 (135 aa).

The tract at residues 96–135 (SADNRKPLKTEGHLSRDPRAKERRKYGLKKARKAPQFSKR) is disordered. Over residues 97 to 115 (ADNRKPLKTEGHLSRDPRA) the composition is skewed to basic and acidic residues. A compositionally biased stretch (basic residues) spans 116–135 (KERRKYGLKKARKAPQFSKR).

This sequence belongs to the universal ribosomal protein uS9 family.

The chain is Small ribosomal subunit protein uS9 from Prochlorococcus marinus (strain MIT 9303).